The following is a 396-amino-acid chain: Elongation factor Tu (396 aa).

The 197-residue stretch at Lys10–Glu206 folds into the tr-type G domain. Residues Gly19–Thr26 are G1. Gly19 to Thr26 serves as a coordination point for GTP. Thr26 is a Mg(2+) binding site. Residues Gly60–Asn64 form a G2 region. A G3 region spans residues Asp81–Gly84. GTP contacts are provided by residues Asp81–His85 and Asn136–Asp139. Residues Asn136–Asp139 are G4. Positions Ser174–Lys176 are G5.

This sequence belongs to the TRAFAC class translation factor GTPase superfamily. Classic translation factor GTPase family. EF-Tu/EF-1A subfamily. Monomer.

The protein localises to the cytoplasm. It carries out the reaction GTP + H2O = GDP + phosphate + H(+). GTP hydrolase that promotes the GTP-dependent binding of aminoacyl-tRNA to the A-site of ribosomes during protein biosynthesis. This is Elongation factor Tu from Herminiimonas arsenicoxydans.